The chain runs to 432 residues: Fibroleukin (432 aa).

A signal peptide spans 1–19 (MRLPGWLWLSSAVLAACRA). N-linked (GlcNAc...) asparagine glycosylation occurs at Asn-24. Residues 71–157 (GSMEEVLKEV…QGRLETLHLV (87 aa)) are a coiled coil. Residues 100-122 (QADDHRDPGGNGGNGAETAEDSR) form a disordered region. 4 N-linked (GlcNAc...) asparagine glycosylation sites follow: Asn-172, Asn-228, Asn-256, and Asn-329. The Fibrinogen C-terminal domain maps to 197 to 429 (PVQHLIYKDC…QAKMMIRPKN (233 aa)). An intrachain disulfide couples Cys-206 to Cys-235. Cys-364 and Cys-377 are disulfide-bonded.

Homotetramer; disulfide-linked. In terms of tissue distribution, constitutively expressed in cytotoxic T-cells.

The protein resides in the secreted. Functionally, converts prothrombin to thrombin. The protein is Fibroleukin (Fgl2) of Mus musculus (Mouse).